An 82-amino-acid chain; its full sequence is Small ribosomal subunit protein bS16 (82 aa).

This sequence belongs to the bacterial ribosomal protein bS16 family.

This chain is Small ribosomal subunit protein bS16, found in Blochmanniella floridana.